The following is a 184-amino-acid chain: Oocyte-secreted protein 4A (184 aa).

An N-terminal signal peptide occupies residues 1–19 (MKISCVLGKLLMLFELIHG). Residue Asn-128 is glycosylated (N-linked (GlcNAc...) asparagine).

It belongs to the PLAC1 family.

Its subcellular location is the secreted. This Homo sapiens (Human) protein is Oocyte-secreted protein 4A.